The primary structure comprises 57 residues: UPF0391 membrane protein bsl6560 (57 aa).

2 consecutive transmembrane segments (helical) span residues 4 to 24 (WVVT…GGIA) and 30 to 50 (IAKI…VVGL).

Belongs to the UPF0391 family.

Its subcellular location is the cell membrane. In Bradyrhizobium diazoefficiens (strain JCM 10833 / BCRC 13528 / IAM 13628 / NBRC 14792 / USDA 110), this protein is UPF0391 membrane protein bsl6560.